The primary structure comprises 525 residues: Glutamate--cysteine ligase (525 aa).

Belongs to the glutamate--cysteine ligase type 1 family. Type 1 subfamily.

The enzyme catalyses L-cysteine + L-glutamate + ATP = gamma-L-glutamyl-L-cysteine + ADP + phosphate + H(+). The protein operates within sulfur metabolism; glutathione biosynthesis; glutathione from L-cysteine and L-glutamate: step 1/2. This chain is Glutamate--cysteine ligase, found in Hahella chejuensis (strain KCTC 2396).